A 292-amino-acid polypeptide reads, in one-letter code: MKGTIIKGIGGFYYIKIDNSEEIIECKARGKFRHTELTPMIGDYVEISIDKNNKGAIEKIYERRSELFRPAVANVTQALVVFSFKNPDINIDLLNKFLLLCEYNNLKAIVCFNKMDLVNKEDYKDIISMIEQAGYDIIFLNAKEERNMDIIKKLIKDNVTVFCGPSGVGKSTMLNKIIGKETMITGNISEKLKRGKHTTRHSELIYVDEGLLVDTPGFSSLDINFMEKEDLLHCIPEFRDFIGECKFTGCLHHREPNCAVKKAVEEGHIHKNRYDFYIKTLEEFMNRRKKKW.

Positions 64–221 (RSELFRPAVA…LVDTPGFSSL (158 aa)) constitute a CP-type G domain. GTP contacts are provided by residues 113–116 (NKMD) and 164–172 (GPSGVGKST). Residues C245, C250, H252, and C258 each contribute to the Zn(2+) site.

Belongs to the TRAFAC class YlqF/YawG GTPase family. RsgA subfamily. In terms of assembly, monomer. Associates with 30S ribosomal subunit, binds 16S rRNA. Zn(2+) serves as cofactor.

The protein localises to the cytoplasm. Its function is as follows. One of several proteins that assist in the late maturation steps of the functional core of the 30S ribosomal subunit. Helps release RbfA from mature subunits. May play a role in the assembly of ribosomal proteins into the subunit. Circularly permuted GTPase that catalyzes slow GTP hydrolysis, GTPase activity is stimulated by the 30S ribosomal subunit. The protein is Small ribosomal subunit biogenesis GTPase RsgA of Clostridium botulinum (strain Kyoto / Type A2).